Reading from the N-terminus, the 164-residue chain is ATP synthase B' chain, cyanelle (164 aa).

A helical membrane pass occupies residues 26-46 (ATLPVMMVQLLVLMLILNAVF).

This sequence belongs to the ATPase B chain family. As to quaternary structure, F-type ATPases have 2 components, F(1) - the catalytic core - and F(0) - the membrane proton channel. F(1) has five subunits: alpha(3), beta(3), gamma(1), delta(1), epsilon(1). F(0) has four main subunits: a(1), b(1), b'(1) and c(10-14). The alpha and beta chains form an alternating ring which encloses part of the gamma chain. F(1) is attached to F(0) by a central stalk formed by the gamma and epsilon chains, while a peripheral stalk is formed by the delta, b and b' chains.

The protein localises to the plastid. Its subcellular location is the cyanelle thylakoid membrane. F(1)F(0) ATP synthase produces ATP from ADP in the presence of a proton or sodium gradient. F-type ATPases consist of two structural domains, F(1) containing the extramembraneous catalytic core and F(0) containing the membrane proton channel, linked together by a central stalk and a peripheral stalk. During catalysis, ATP synthesis in the catalytic domain of F(1) is coupled via a rotary mechanism of the central stalk subunits to proton translocation. Functionally, component of the F(0) channel, it forms part of the peripheral stalk, linking F(1) to F(0). The b'-subunit is a diverged and duplicated form of b found in plants and photosynthetic bacteria. This chain is ATP synthase B' chain, cyanelle, found in Cyanophora paradoxa.